A 592-amino-acid polypeptide reads, in one-letter code: Prospero homeobox protein 2 (592 aa).

Disordered regions lie at residues 20–56 (EACTEGERSSSPPELDRDSPFPWSQVPSSSPTDPEWF), 85–129 (GNAQ…RKGG), 155–218 (KPRD…LPSG), 308–336 (RLDSPRYPIPPRMTPKPCQDPPANFPLTA), and 353–382 (RYNNGHWSSSPPQDSSSQRHPSSEPALRPW). Residues 95–106 (CPKKARERKRKQ) show a composition bias toward basic residues. The span at 201-211 (SGAEKHQESEK) shows a compositional bias: basic and acidic residues. Residues 314–331 (YPIPPRMTPKPCQDPPAN) are compositionally biased toward pro residues. Residues 360 to 377 (SSSPPQDSSSQRHPSSEP) show a composition bias toward low complexity. Positions 437-495 (QEGLNPGHLKKAKLMFFFTRYPSSNLLKVYFPDVQFNRCITSQMIKWFSNFREFYYIQM) constitute a Prospero-type homeo domain. Residues 437–592 (QEGLNPGHLK…EIFKSSSYPQ (156 aa)) form a homeo-Prospero region. The region spanning 496 to 592 (EKSARQAISD…EIFKSSSYPQ (97 aa)) is the Prospero domain.

It belongs to the Prospero homeodomain family.

Its subcellular location is the nucleus. Its function is as follows. Transcription regulator. Does not seem to be essential for embryonic development and postnatal survival. This is Prospero homeobox protein 2 (PROX2) from Homo sapiens (Human).